The chain runs to 248 residues: 2,3-bisphosphoglycerate-dependent phosphoglycerate mutase (248 aa).

Substrate contacts are provided by residues Arg8–Asn15, Thr21–Gly22, Arg60, Glu87–Tyr90, Lys98, Arg114–Arg115, and Gly183–Asn184. His9 (tele-phosphohistidine intermediate) is an active-site residue. Residue Glu87 is the Proton donor/acceptor of the active site.

This sequence belongs to the phosphoglycerate mutase family. BPG-dependent PGAM subfamily.

It catalyses the reaction (2R)-2-phosphoglycerate = (2R)-3-phosphoglycerate. It participates in carbohydrate degradation; glycolysis; pyruvate from D-glyceraldehyde 3-phosphate: step 3/5. Its function is as follows. Catalyzes the interconversion of 2-phosphoglycerate and 3-phosphoglycerate. In Parabacteroides distasonis (strain ATCC 8503 / DSM 20701 / CIP 104284 / JCM 5825 / NCTC 11152), this protein is 2,3-bisphosphoglycerate-dependent phosphoglycerate mutase.